Reading from the N-terminus, the 253-residue chain is Ubiquinone/menaquinone biosynthesis C-methyltransferase UbiE (253 aa).

S-adenosyl-L-methionine-binding positions include T76, D97, 125 to 126 (NA), and S142.

It belongs to the class I-like SAM-binding methyltransferase superfamily. MenG/UbiE family.

It carries out the reaction a 2-demethylmenaquinol + S-adenosyl-L-methionine = a menaquinol + S-adenosyl-L-homocysteine + H(+). The enzyme catalyses a 2-methoxy-6-(all-trans-polyprenyl)benzene-1,4-diol + S-adenosyl-L-methionine = a 5-methoxy-2-methyl-3-(all-trans-polyprenyl)benzene-1,4-diol + S-adenosyl-L-homocysteine + H(+). Its pathway is quinol/quinone metabolism; menaquinone biosynthesis; menaquinol from 1,4-dihydroxy-2-naphthoate: step 2/2. It functions in the pathway cofactor biosynthesis; ubiquinone biosynthesis. In terms of biological role, methyltransferase required for the conversion of demethylmenaquinol (DMKH2) to menaquinol (MKH2) and the conversion of 2-polyprenyl-6-methoxy-1,4-benzoquinol (DDMQH2) to 2-polyprenyl-3-methyl-6-methoxy-1,4-benzoquinol (DMQH2). The polypeptide is Ubiquinone/menaquinone biosynthesis C-methyltransferase UbiE (Xylella fastidiosa (strain M23)).